Reading from the N-terminus, the 401-residue chain is Acetate kinase (401 aa).

Asn9 is a binding site for Mg(2+). ATP is bound at residue Lys16. Arg88 lines the substrate pocket. Asp147 (proton donor/acceptor) is an active-site residue. Residues 207 to 211 (HLGNG), 282 to 284 (DCR), and 333 to 337 (GIGEN) each bind ATP. Glu388 contributes to the Mg(2+) binding site.

The protein belongs to the acetokinase family. In terms of assembly, homodimer. Mg(2+) serves as cofactor. The cofactor is Mn(2+).

It localises to the cytoplasm. It catalyses the reaction acetate + ATP = acetyl phosphate + ADP. It participates in metabolic intermediate biosynthesis; acetyl-CoA biosynthesis; acetyl-CoA from acetate: step 1/2. Catalyzes the formation of acetyl phosphate from acetate and ATP. Can also catalyze the reverse reaction. This Haemophilus influenzae (strain PittEE) protein is Acetate kinase.